The primary structure comprises 323 residues: tRNA N6-adenosine threonylcarbamoyltransferase (323 aa).

Fe cation contacts are provided by His-105, His-109, and Tyr-126. Substrate-binding positions include 126-130 (YVSGG), Asp-158, Gly-171, Glu-175, and Asn-255. Asp-283 contributes to the Fe cation binding site.

Belongs to the KAE1 / TsaD family. Monomer. Component of the KEOPS complex that consists of Kae1, Bud32, Cgi121 and Pcc1; the whole complex dimerizes. Requires Fe(2+) as cofactor.

The protein localises to the cytoplasm. The catalysed reaction is L-threonylcarbamoyladenylate + adenosine(37) in tRNA = N(6)-L-threonylcarbamoyladenosine(37) in tRNA + AMP + H(+). In terms of biological role, required for the formation of a threonylcarbamoyl group on adenosine at position 37 (t(6)A37) in tRNAs that read codons beginning with adenine. Is a component of the KEOPS complex that is probably involved in the transfer of the threonylcarbamoyl moiety of threonylcarbamoyl-AMP (TC-AMP) to the N6 group of A37. Kae1 likely plays a direct catalytic role in this reaction, but requires other protein(s) of the complex to fulfill this activity. The protein is tRNA N6-adenosine threonylcarbamoyltransferase of Archaeoglobus fulgidus (strain ATCC 49558 / DSM 4304 / JCM 9628 / NBRC 100126 / VC-16).